Consider the following 291-residue polypeptide: Ribosomal RNA small subunit methyltransferase A (291 aa).

The S-adenosyl-L-methionine site is built by Asn29, Leu31, Gly56, Glu77, Asp102, and Asn127.

It belongs to the class I-like SAM-binding methyltransferase superfamily. rRNA adenine N(6)-methyltransferase family. RsmA subfamily.

The protein localises to the cytoplasm. The enzyme catalyses adenosine(1518)/adenosine(1519) in 16S rRNA + 4 S-adenosyl-L-methionine = N(6)-dimethyladenosine(1518)/N(6)-dimethyladenosine(1519) in 16S rRNA + 4 S-adenosyl-L-homocysteine + 4 H(+). In terms of biological role, specifically dimethylates two adjacent adenosines (A1518 and A1519) in the loop of a conserved hairpin near the 3'-end of 16S rRNA in the 30S particle. May play a critical role in biogenesis of 30S subunits. In Geobacillus sp. (strain WCH70), this protein is Ribosomal RNA small subunit methyltransferase A.